The primary structure comprises 136 residues: MVRVARSVNARKKRRSILAAAKGYRGQRSRLYRKAKEQVLRSLVYAYRDRRKRKSSFRKLWIIRINAAARMEGVTYNRFLQGLKLANIELDRRSLAHLAVHNPDTFSALVGVAKDSLKNAPDPVAAPRLRGTSSRT.

The protein belongs to the bacterial ribosomal protein bL20 family.

In terms of biological role, binds directly to 23S ribosomal RNA and is necessary for the in vitro assembly process of the 50S ribosomal subunit. It is not involved in the protein synthesizing functions of that subunit. The polypeptide is Large ribosomal subunit protein bL20 (Tropheryma whipplei (strain TW08/27) (Whipple's bacillus)).